The primary structure comprises 480 residues: Protein nucleotidyltransferase YdiU (480 aa).

G87, G89, R90, K110, D122, G123, R173, and R180 together coordinate ATP. Residue D245 is the Proton acceptor of the active site. The Mg(2+) site is built by N246 and D255. An ATP-binding site is contributed by D255.

This sequence belongs to the SELO family. It depends on Mg(2+) as a cofactor. Requires Mn(2+) as cofactor.

The catalysed reaction is L-seryl-[protein] + ATP = 3-O-(5'-adenylyl)-L-seryl-[protein] + diphosphate. The enzyme catalyses L-threonyl-[protein] + ATP = 3-O-(5'-adenylyl)-L-threonyl-[protein] + diphosphate. It catalyses the reaction L-tyrosyl-[protein] + ATP = O-(5'-adenylyl)-L-tyrosyl-[protein] + diphosphate. It carries out the reaction L-histidyl-[protein] + UTP = N(tele)-(5'-uridylyl)-L-histidyl-[protein] + diphosphate. The catalysed reaction is L-seryl-[protein] + UTP = O-(5'-uridylyl)-L-seryl-[protein] + diphosphate. The enzyme catalyses L-tyrosyl-[protein] + UTP = O-(5'-uridylyl)-L-tyrosyl-[protein] + diphosphate. In terms of biological role, nucleotidyltransferase involved in the post-translational modification of proteins. It can catalyze the addition of adenosine monophosphate (AMP) or uridine monophosphate (UMP) to a protein, resulting in modifications known as AMPylation and UMPylation. This is Protein nucleotidyltransferase YdiU from Jannaschia sp. (strain CCS1).